The primary structure comprises 478 residues: Cytochrome c-552 (478 aa).

The signal sequence occupies residues 1–26; the sequence is MTRIKINARRIFSLLIPFFFFTSVHA. Histidine 94 serves as a coordination point for heme c. Residues cysteine 122, cysteine 125, and lysine 126 each contribute to the heme site. Heme c-binding residues include cysteine 160, cysteine 163, histidine 164, cysteine 209, cysteine 212, and histidine 213. 4 residues coordinate Ca(2+): glutamate 215, tyrosine 216, lysine 261, and glutamine 263. Tyrosine 216 lines the substrate pocket. Histidine 264 is a binding site for substrate. Heme c contacts are provided by histidine 275, cysteine 282, cysteine 285, histidine 286, histidine 301, cysteine 314, cysteine 317, histidine 318, and histidine 393.

Belongs to the cytochrome c-552 family. The cofactor is Ca(2+). Heme c serves as cofactor.

The protein localises to the periplasm. The enzyme catalyses 6 Fe(III)-[cytochrome c] + NH4(+) + 2 H2O = 6 Fe(II)-[cytochrome c] + nitrite + 8 H(+). The protein operates within nitrogen metabolism; nitrate reduction (assimilation). In terms of biological role, catalyzes the reduction of nitrite to ammonia, consuming six electrons in the process. This is Cytochrome c-552 from Escherichia coli (strain ATCC 8739 / DSM 1576 / NBRC 3972 / NCIMB 8545 / WDCM 00012 / Crooks).